Reading from the N-terminus, the 852-residue chain is Bifunctional uridylyltransferase/uridylyl-removing enzyme (852 aa).

Positions 1–318 are uridylyltransferase; sequence MPANLSSALE…SAPMRVTLRI (318 aa). The tract at residues 319-672 is uridylyl-removing; sequence DDDYIQVNNQ…SRILFKSDSF (354 aa). Residues 436–558 enclose the HD domain; the sequence is VDDHILTVVR…VQTHERLSAL (123 aa). ACT domains are found at residues 673–757 and 785–852; these read QVMV…SHSR and SVEI…EQLS.

Belongs to the GlnD family. Mg(2+) is required as a cofactor.

It catalyses the reaction [protein-PII]-L-tyrosine + UTP = [protein-PII]-uridylyl-L-tyrosine + diphosphate. The catalysed reaction is [protein-PII]-uridylyl-L-tyrosine + H2O = [protein-PII]-L-tyrosine + UMP + H(+). Its activity is regulated as follows. Uridylyltransferase (UTase) activity is inhibited by glutamine, while glutamine activates uridylyl-removing (UR) activity. Modifies, by uridylylation and deuridylylation, the PII regulatory proteins (GlnB and homologs), in response to the nitrogen status of the cell that GlnD senses through the glutamine level. Under low glutamine levels, catalyzes the conversion of the PII proteins and UTP to PII-UMP and PPi, while under higher glutamine levels, GlnD hydrolyzes PII-UMP to PII and UMP (deuridylylation). Thus, controls uridylylation state and activity of the PII proteins, and plays an important role in the regulation of nitrogen assimilation and metabolism. This Neisseria meningitidis serogroup A / serotype 4A (strain DSM 15465 / Z2491) protein is Bifunctional uridylyltransferase/uridylyl-removing enzyme.